Consider the following 251-residue polypeptide: Ubiquinone/menaquinone biosynthesis C-methyltransferase UbiE (251 aa).

S-adenosyl-L-methionine is bound by residues Thr74, Asp95, and 123-124 (NA).

It belongs to the class I-like SAM-binding methyltransferase superfamily. MenG/UbiE family.

It carries out the reaction a 2-demethylmenaquinol + S-adenosyl-L-methionine = a menaquinol + S-adenosyl-L-homocysteine + H(+). The enzyme catalyses a 2-methoxy-6-(all-trans-polyprenyl)benzene-1,4-diol + S-adenosyl-L-methionine = a 5-methoxy-2-methyl-3-(all-trans-polyprenyl)benzene-1,4-diol + S-adenosyl-L-homocysteine + H(+). It participates in quinol/quinone metabolism; menaquinone biosynthesis; menaquinol from 1,4-dihydroxy-2-naphthoate: step 2/2. Its pathway is cofactor biosynthesis; ubiquinone biosynthesis. In terms of biological role, methyltransferase required for the conversion of demethylmenaquinol (DMKH2) to menaquinol (MKH2) and the conversion of 2-polyprenyl-6-methoxy-1,4-benzoquinol (DDMQH2) to 2-polyprenyl-3-methyl-6-methoxy-1,4-benzoquinol (DMQH2). The chain is Ubiquinone/menaquinone biosynthesis C-methyltransferase UbiE from Shewanella sp. (strain ANA-3).